A 332-amino-acid polypeptide reads, in one-letter code: MKVTFEELKGAFYRVLRSRNIAEDTADACAEMFARTTESGVYSHGVNRFPRFIQQLDNGDIIPDAKPQRVTSLGAIEQWDAQRAIGNLTAKKMMDRAIELASDHGIGLVALRNANHWMRGGSYGWQAAEKGYIGICWTNSIAVMPPWGAKECRIGTNPLIVAIPSTPITMVDMSMSMFSYGMLEVNRLAGRELPVDGGFDDNGQLTKEPGVIEKNRRILPMGYWKGSGLSIVLDMIATLLSNGSSVAEVTQENSDEYGVSQIFIAIEVDKLIDGATRDAKLQRIMDFITTAERADDNVAIRLPGHEFTKLLDDNRRHGITVDDSVWAKIQAL.

H44 serves as the catalytic Proton donor. Residues 168-174 (ITMVDMS), 224-225 (WK), and 304-306 (GHE) each bind NAD(+).

The protein belongs to the LDH2/MDH2 oxidoreductase family. DlgD subfamily. In terms of assembly, homodimer.

The protein localises to the cytoplasm. It carries out the reaction 3-dehydro-L-gulonate + NAD(+) = 2,3-dioxo-L-gulonate + NADH + H(+). The catalysed reaction is 3-dehydro-L-gulonate + NADP(+) = 2,3-dioxo-L-gulonate + NADPH + H(+). Catalyzes the reduction of 2,3-diketo-L-gulonate in the presence of NADH, to form 3-keto-L-gulonate. In Salmonella paratyphi A (strain ATCC 9150 / SARB42), this protein is 2,3-diketo-L-gulonate reductase.